The following is a 317-amino-acid chain: Methyltransferase CPUR_05424 (317 aa).

The segment at D57–C149 is methyltransferase domain.

The protein belongs to the methyltransferase superfamily.

Its pathway is pigment biosynthesis. Its function is as follows. Methyltransferase; part of the ergochrome gene cluster responsible for the typical purple-black color of the ergot sclerotia. The ergochrome gene cluster produces several ergot pigments including the yellow ergochrome secalonic acid and its derivatives, as well as the red anthraquinones endocrocin and clavorubin. The pathway begins with the synthesis of atrochrysone thioester by the polyketide synthase (PKS) CPUR_05437. The atrochrysone carboxyl ACP thioesterase CPUR_05436 then breaks the thioester bond and releases the atrochrysone carboxylic acid from CPUR_05437. The atrochrysone carboxylic acid is then converted to atrochrysone which is further transformed into emodin anthrone. The next step is performed by the anthrone oxygenase CPUR_05434 that catalyzes the oxidation of emodinanthrone to emodin. Emodin is further modified to yield monodictyphenone via several steps involving CPUR_05427, CPUR_05428, CPUR_05429 and CPUR_05430. The short chain dehydrogenase/reductase CPUR_05418 then catalyzes the C-5 ketoreduction to give the xanthone skeleton of the monomeric units. Ergochromes formation requires further dimerization steps of different xanthone units, probably catalyzed by the cytochrome P450 monooxygenase CPUR_05419. CPUR_05425, CPUR_05426 and CPUR_05431 are unique to Claviceps, thus it is likely that they are involved in further modification of xanthone units or in their dimerization. The yellow ergochromes and the red anthraquinone pigments endocrocin and clavorubin are products from the same PKS derived precursors and the latter are likely shunt products in the pathway of xanthone biosynthesis. It is proposed that atrochrysone carboxylic acid released from the PKS CPUR_05437 can also be converted to endocrocin anthrone which is further oxidized into endocrocin by CPUR_05435. Endocrocin could be then modified to clavorubin, possibly by CPUR_05423 and CPUR_05431. Clavorubin is the principal anthraquinone metabolite produced by the cluster with a much higher yield compared to endocrocin. The protein is Methyltransferase CPUR_05424 of Claviceps purpurea (strain 20.1) (Ergot fungus).